A 207-amino-acid chain; its full sequence is Large ribosomal subunit protein uL18 (207 aa).

This sequence belongs to the universal ribosomal protein uL18 family. As to quaternary structure, part of the 50S ribosomal subunit. Contacts the 5S and 23S rRNAs.

This is one of the proteins that bind and probably mediate the attachment of the 5S RNA into the large ribosomal subunit, where it forms part of the central protuberance. In Caldivirga maquilingensis (strain ATCC 700844 / DSM 13496 / JCM 10307 / IC-167), this protein is Large ribosomal subunit protein uL18.